We begin with the raw amino-acid sequence, 159 residues long: MAKEPTKAAHPQPEQTKTNHKAHRPVGGYVLAKDPIEINQGRPRTTLTVRNTGDRPIQIGSHFHFFEVNRYLEFDRSKAFGLRLDIPANTAVRFEPGDEKEVTLVPFAGKRFIFGFNNLVDGWSGDGPTPDYQPNREIAAERAEKLGFKSCKSGGKDAK.

The interval 1–24 is disordered; it reads MAKEPTKAAHPQPEQTKTNHKAHR.

The protein belongs to the urease beta subunit family. Heterotrimer of UreA (gamma), UreB (beta) and UreC (alpha) subunits. Three heterotrimers associate to form the active enzyme.

The protein localises to the cytoplasm. The catalysed reaction is urea + 2 H2O + H(+) = hydrogencarbonate + 2 NH4(+). Its pathway is nitrogen metabolism; urea degradation; CO(2) and NH(3) from urea (urease route): step 1/1. Functionally, disrupting the ure2 operon has no effect on urease activity, or pathogen survival in BALB/c mice when inoculated by gavage, but confers slightly enhanced resistance to low pH killing in vitro. This chain is Urease subunit beta 2, found in Brucella suis biovar 1 (strain 1330).